The sequence spans 489 residues: WPP domain-interacting protein 1 (489 aa).

Positions 49–73 (SNSVELGKPMSFDSPGDGGGAYSPV) are disordered. 3 short sequence motifs (nuclear localization signal) span residues 80-81 (RK), 83-84 (RR), and 104-105 (KR). The segment at 195-264 (PMISSGQGGN…DDAGGEGGES (70 aa)) is disordered. Over residues 215–224 (GESVDFEKEN) the composition is skewed to basic and acidic residues. The stretch at 323 to 446 (EIVTLVNNVE…QDLQNDCIEI (124 aa)) forms a coiled coil. The 31-residue stretch at 459–489 (SYVLIQLVLLSTVVLLLLSQLLPEPDTVVPT) folds into the KASH domain. A helical membrane pass occupies residues 460–480 (YVLIQLVLLSTVVLLLLSQLL).

In terms of assembly, homodimer and heterodimer with WIP2. Component of Ran complexes at least composed of WIT1 or WIT2, RANGAP1 or RANGAP2, and WIP1 or WIP2 or WIP3. Interacts with RANGAP1, RANGAP2, WPP1/MAF1, and WPP2/MAF2. Interacts with SUN1 and SUN2. Interacts with KIN1. Core component of the LINC complex which is composed of inner nuclear membrane SUN domain-containing proteins coupled to outer nuclear membrane WIP and WIT proteins. The LINC complex also involves nucleoskeletal proteins CRWN/LINC and possibly KAKU4 and the cytoskeletal myosin KAKU1. Interacts with WIT1 and SUN2. Interacts with WIT2. Interacts with SUN3. As to expression, expressed in seedlings, roots, stems, leaves, and flowers.

It is found in the nucleus envelope. The protein localises to the nucleus membrane. Functionally, mediates and enhances the nuclear envelope docking of RANGAP proteins mediated by WIT1 and WIT2 in the undifferentiated cells of root tips. As component of the SUN-WIP-WIT2-KAKU1 complex, mediates the transfer of cytoplasmic forces to the nuclear envelope (NE), leading to nuclear shape changes. This Arabidopsis thaliana (Mouse-ear cress) protein is WPP domain-interacting protein 1 (WIP1).